We begin with the raw amino-acid sequence, 245 residues long: MTKSPIGGNRSGRKLGQKVKKGKLKASSRRWIERHINDPYVQRAQLEGYRARAAFKLLEIDEKHKILAGAKRIIDLGAAPGSWSQIAAKVTNSTDADPRVAAIDFLEMDPIPGVRFLQMDFLDPEAPENLKQAIGGAPDIVLSDMAAPTTGHRQTDHIRTMHLCEVAAHFAVEVLAEGGHFLAKTFQGGTERDLLNMLKQNFRQVVHVKPASSRAESVEMFLLAKGFKGRHALESDEPAEGAAEE.

The interval 1–25 (MTKSPIGGNRSGRKLGQKVKKGKLK) is disordered. Residues 11 to 25 (SGRKLGQKVKKGKLK) show a composition bias toward basic residues. Residues glycine 81, tryptophan 83, aspartate 104, aspartate 120, and aspartate 144 each coordinate S-adenosyl-L-methionine. The active-site Proton acceptor is lysine 184.

Belongs to the class I-like SAM-binding methyltransferase superfamily. RNA methyltransferase RlmE family.

It is found in the cytoplasm. The enzyme catalyses uridine(2552) in 23S rRNA + S-adenosyl-L-methionine = 2'-O-methyluridine(2552) in 23S rRNA + S-adenosyl-L-homocysteine + H(+). Its function is as follows. Specifically methylates the uridine in position 2552 of 23S rRNA at the 2'-O position of the ribose in the fully assembled 50S ribosomal subunit. This Rhizobium meliloti (strain 1021) (Ensifer meliloti) protein is Ribosomal RNA large subunit methyltransferase E.